The primary structure comprises 242 residues: Segregation and condensation protein A (242 aa).

The protein belongs to the ScpA family. Component of a cohesin-like complex composed of ScpA, ScpB and the Smc homodimer, in which ScpA and ScpB bind to the head domain of Smc. The presence of the three proteins is required for the association of the complex with DNA.

The protein resides in the cytoplasm. Its function is as follows. Participates in chromosomal partition during cell division. May act via the formation of a condensin-like complex containing Smc and ScpB that pull DNA away from mid-cell into both cell halves. In Streptococcus pneumoniae serotype 4 (strain ATCC BAA-334 / TIGR4), this protein is Segregation and condensation protein A.